The following is a 125-amino-acid chain: Small ribosomal subunit protein uS12m (125 aa).

A disordered region spans residues 1–27 (MPTKNQLIRHGREEKRRTDRTRALDQC). The segment covering 10–23 (HGREEKRRTDRTRA) has biased composition (basic and acidic residues).

The protein belongs to the universal ribosomal protein uS12 family.

It localises to the mitochondrion. In terms of biological role, protein S12 is involved in the translation initiation step. The polypeptide is Small ribosomal subunit protein uS12m (RPS12) (Triticum aestivum (Wheat)).